The primary structure comprises 190 residues: RNA pyrophosphohydrolase (190 aa).

A Nudix hydrolase domain is found at 6–149 (GYRPNVGIIL…KRDVYTQALN (144 aa)). A Nudix box motif is present at residues 38–59 (GGIKYGESPVQAMYRELHEEVG). Residues 167–190 (QRVHGPRSTDNPSSETDGHAHIAG) are disordered.

It belongs to the Nudix hydrolase family. RppH subfamily. A divalent metal cation serves as cofactor.

In terms of biological role, accelerates the degradation of transcripts by removing pyrophosphate from the 5'-end of triphosphorylated RNA, leading to a more labile monophosphorylated state that can stimulate subsequent ribonuclease cleavage. The chain is RNA pyrophosphohydrolase from Bordetella parapertussis (strain 12822 / ATCC BAA-587 / NCTC 13253).